A 290-amino-acid polypeptide reads, in one-letter code: Arylamine N-acetyltransferase 1 (290 aa).

An N-acetylmethionine modification is found at M1. The Acyl-thioester intermediate role is filled by C68. Residue S103 coordinates CoA. V106–H107 contributes to the substrate binding site. Catalysis depends on residues H107 and D122. Y208 lines the CoA pocket.

The protein belongs to the arylamine N-acetyltransferase family.

It is found in the cytoplasm. It carries out the reaction an arylamine + acetyl-CoA = an N-acetylarylamine + CoA. Functionally, participates in the detoxification of a plethora of hydrazine and arylamine drugs. Acetylates both arylamines and arylalkylamines. This Rattus norvegicus (Rat) protein is Arylamine N-acetyltransferase 1 (Nat1).